The sequence spans 242 residues: MAGHSKWANIQHKKARQDAKRGKIFTRLIKEITVAARMGGGDPGANPRLRLALEKAAENNMPKDNVQRAIDKGTGNLEGVEYIGLRYEGYGIGGAALMVDCLTDNKTRTVADVRHAFTKNGGNLGTDGCVAFNFVHQGYLVFEPGVDEDELMEAALEAGAEDVVTNDDGSIEVITAPNDWAGVKSALEAAGYKSVDGDVTMRAQNETELSGDDAVKMQKLIDALEDLDDVQDVYTSAVLNLD.

This sequence belongs to the TACO1 family.

It is found in the cytoplasm. The protein is Probable transcriptional regulatory protein NGK_1508 of Neisseria gonorrhoeae (strain NCCP11945).